The chain runs to 511 residues: RNA polymerase principal sigma factor HrdB (511 aa).

Residues 72-186 (SAAEPKRTRK…AATEEPEGTE (115 aa)) are disordered. Over residues 78–93 (RTRKSVAAKSPAKRTA) the composition is skewed to basic residues. A compositionally biased stretch (low complexity) spans 94–121 (TKAVAAKPVTSRKATAPAAPAAPATEPA). Positions 132–158 (AAAKKTTAKKATAKKTTAKKAAAKKTT) are enriched in basic residues. Positions 211–347 (TADPVKDYLK…ITRAMADQAR (137 aa)) are binds RNA polymerase-binding protein RbpA. Residues 278 to 348 (LLEANLRLVV…TRAMADQART (71 aa)) are sigma-70 factor domain-2. Positions 302 to 305 (DLIQ) match the Interaction with polymerase core subunit RpoC motif. Residues 357-433 (EVINKLARVQ…DSEAVVPADA (77 aa)) are sigma-70 factor domain-3. Residues 446–499 (VLDTLSEREAGVVSMRFGLTDGQPKTLDEIGKVYGVTRERIRQIESKTMSKLRH) form a sigma-70 factor domain-4 region. The segment at residues 472–491 (LDEIGKVYGVTRERIRQIES) is a DNA-binding region (H-T-H motif).

Belongs to the sigma-70 factor family. As to quaternary structure, homotrimer (Potential). interacts transiently with the RNA polymerase core complex. Interacts with RNA polymerase-binding protein RbpA via its sigma-2 region (residues 211-347) in a free form.

In terms of biological role, sigma factors are initiation factors that promote the attachment of RNA polymerase to specific initiation sites and are then released. This sigma factor is the primary sigma factor during exponential growth. Its activity is stimulated by RbpA. This chain is RNA polymerase principal sigma factor HrdB (hrdB), found in Streptomyces coelicolor (strain ATCC BAA-471 / A3(2) / M145).